The primary structure comprises 1391 residues: DNA-directed RNA polymerase subunit beta (1391 aa).

Belongs to the RNA polymerase beta chain family. As to quaternary structure, the RNAP catalytic core consists of 2 alpha, 1 beta, 1 beta' and 1 omega subunit. When a sigma factor is associated with the core the holoenzyme is formed, which can initiate transcription.

The catalysed reaction is RNA(n) + a ribonucleoside 5'-triphosphate = RNA(n+1) + diphosphate. Functionally, DNA-dependent RNA polymerase catalyzes the transcription of DNA into RNA using the four ribonucleoside triphosphates as substrates. The chain is DNA-directed RNA polymerase subunit beta from Paramagnetospirillum magneticum (strain ATCC 700264 / AMB-1) (Magnetospirillum magneticum).